The chain runs to 342 residues: WW domain binding protein 1-like (342 aa).

The chain crosses the membrane as a helical span at residues 42-62; it reads LWWFWLVWTIIIILSCCCVCH. Disordered stretches follow at residues 133–247 and 292–320; these read LPPQ…RRFT and PGDEEEGLCQSSEEQAREPGHPHLPRPPA. Positions 158 to 173 are enriched in low complexity; it reads SSPLSEPSRSSTRPPS. S173 bears the Phosphoserine mark. Over residues 212–240 the composition is skewed to basic and acidic residues; sequence LDKDAECREELLKDDSSEHGAPDSKEKTP.

The protein localises to the membrane. This is WW domain binding protein 1-like (WBP1L) from Homo sapiens (Human).